Consider the following 465-residue polypeptide: A-type ATP synthase subunit B (465 aa).

This sequence belongs to the ATPase alpha/beta chains family. As to quaternary structure, has multiple subunits with at least A(3), B(3), C, D, E, F, H, I and proteolipid K(x).

The protein localises to the cell membrane. Functionally, component of the A-type ATP synthase that produces ATP from ADP in the presence of a proton gradient across the membrane. The B chain is a regulatory subunit. In Sulfurisphaera tokodaii (strain DSM 16993 / JCM 10545 / NBRC 100140 / 7) (Sulfolobus tokodaii), this protein is A-type ATP synthase subunit B.